The sequence spans 533 residues: Probable dolichyl pyrophosphate Man9GlcNAc2 alpha-1,3-glucosyltransferase (533 aa).

A disordered region spans residues 1–20 (MPKKKPAKHSGEDDITIPVS). 9 helical membrane-spanning segments follow: residues 42–64 (FLCISLFALLIRSAVTMYPYSGA), 149–169 (WTVLSSDAFIFFPAALFFVLV), 184–204 (WHIAMILLNPCLILIDHGHFQ), 214–234 (VGAIAAVLCESEVLTCVLFSL), 264–284 (ILSVIKLGIAVIVTFVIFWWP), 360–380 (GFLYGLLNSSMAFYLFSFQVH), 422–442 (LLIPYLTLSFLFTVIYHSPGN), 463–483 (VFLLRTHFFISVVLHVLYLTI), and 491–511 (FLFEALIMILCFSYFIMFAFY).

This sequence belongs to the ALG6/ALG8 glucosyltransferase family.

The protein localises to the endoplasmic reticulum membrane. It catalyses the reaction an alpha-D-Man-(1-&gt;2)-alpha-D-Man-(1-&gt;2)-alpha-D-Man-(1-&gt;3)-[alpha-D-Man-(1-&gt;2)-alpha-D-Man-(1-&gt;3)-[alpha-D-Man-(1-&gt;2)-alpha-D-Man-(1-&gt;6)]-alpha-D-Man-(1-&gt;6)]-beta-D-Man-(1-&gt;4)-beta-D-GlcNAc-(1-&gt;4)-alpha-D-GlcNAc-diphospho-di-trans,poly-cis-dolichol + a di-trans,poly-cis-dolichyl beta-D-glucosyl phosphate = an alpha-D-Glc-(1-&gt;3)-alpha-D-Man-(1-&gt;2)-alpha-D-Man-(1-&gt;2)-alpha-D-Man-(1-&gt;3)-[alpha-D-Man-(1-&gt;2)-alpha-D-Man-(1-&gt;3)-[alpha-D-Man-(1-&gt;2)-alpha-D-Man-(1-&gt;6)]-alpha-D-Man-(1-&gt;6)]-beta-D-Man-(1-&gt;4)-beta-D-GlcNAc-(1-&gt;4)-alpha-D-GlcNAc-diphospho-di-trans,poly-cis-dolichol + a di-trans,poly-cis-dolichyl phosphate + H(+). It participates in protein modification; protein glycosylation. Its function is as follows. Adds the first glucose residue to the lipid-linked oligosaccharide precursor for N-linked glycosylation. Transfers glucose from dolichyl phosphate glucose (Dol-P-Glc) onto the lipid-linked oligosaccharide Man(9)GlcNAc(2)-PP-Dol. In Arabidopsis thaliana (Mouse-ear cress), this protein is Probable dolichyl pyrophosphate Man9GlcNAc2 alpha-1,3-glucosyltransferase.